The chain runs to 369 residues: Anhydro-N-acetylmuramic acid kinase (369 aa).

Residue 12–19 (GTSMDGVD) coordinates ATP.

It belongs to the anhydro-N-acetylmuramic acid kinase family.

It carries out the reaction 1,6-anhydro-N-acetyl-beta-muramate + ATP + H2O = N-acetyl-D-muramate 6-phosphate + ADP + H(+). Its pathway is amino-sugar metabolism; 1,6-anhydro-N-acetylmuramate degradation. The protein operates within cell wall biogenesis; peptidoglycan recycling. Functionally, catalyzes the specific phosphorylation of 1,6-anhydro-N-acetylmuramic acid (anhMurNAc) with the simultaneous cleavage of the 1,6-anhydro ring, generating MurNAc-6-P. Is required for the utilization of anhMurNAc either imported from the medium or derived from its own cell wall murein, and thus plays a role in cell wall recycling. This is Anhydro-N-acetylmuramic acid kinase from Shewanella pealeana (strain ATCC 700345 / ANG-SQ1).